A 779-amino-acid polypeptide reads, in one-letter code: Guanyl-specific ribonuclease pgl-1 (779 aa).

Residues 203–464 (KLLLEGVKEQ…KRIIDALEKS (262 aa)) form an involved in dimerization region. Catalysis depends on His-453, which acts as the Proton acceptor. Disordered regions lie at residues 563–596 (HEPQ…PTKS), 611–661 (RDAL…GDAT), and 718–779 (GRGG…GGNF). A compositionally biased stretch (polar residues) spans 584–595 (SISTDGWDSPTK). A compositionally biased stretch (basic and acidic residues) spans 612 to 626 (DALKPDSVNSHRSEE). The segment at 699 to 772 (GGGGGSYGGR…GGDRGGRGGY (74 aa)) is RNA-binding RGG-box.

As to quaternary structure, homodimer. Interacts with pgl-2 and pgl-3; this association is not required for P-granule localization of either pgl-2 or pgl-3. Interacts with ife-1. Interacts with prmt-1; the interaction is direct. Interacts with nmad-1. Interacts with P granule components meg-1, meg-3 and meg-4. Does not require metal ions for catalytic activity. serves as cofactor.

The protein localises to the cytoplasmic granule. It carries out the reaction [RNA] containing guanosine + H2O = an [RNA fragment]-3'-guanosine-3'-phosphate + a 5'-hydroxy-ribonucleotide-3'-[RNA fragment].. Its function is as follows. Guanyl-specific endoribonuclease which cleaves the phosphodiester bond in single-stranded RNA between the 3'-guanylic residue and the 5'-OH residue of adjacent nucleotide, resulting in the formation of a corresponding 2',3'-cyclic phosphate intermediate. Essential role in male and female postembryonic germline development; maternally provided protein maintains a population of proliferating germ cells and zygotic expression is required for correct oogenesis. Together with the P-granule component pgl-3, is involved in the formation of P-granules. Together with pgl-3, probably recruits other granule components such as pos-1, mex-3 and glh-1 to P-granules. In addition, may act redundantly with pgl-3 to protect germ cells from excessive germline apoptosis during normal oogenesis and development of the two gonadal arms. This may in part be through regulating the localization of sir-2.1 which is involved in germ cell apoptosis. May protect somatic cells from excessive apoptosis during normal development. The chain is Guanyl-specific ribonuclease pgl-1 from Caenorhabditis remanei (Caenorhabditis vulgaris).